The sequence spans 146 residues: Hemoglobin subunit beta (146 aa).

Positions 2–146 constitute a Globin domain; the sequence is HWSAEEKQLI…VAHALARKYH (145 aa). Positions 63 and 92 each coordinate heme b.

The protein belongs to the globin family. In terms of assembly, heterotetramer of two alpha chains and two beta chains. In terms of tissue distribution, red blood cells.

Its function is as follows. Involved in oxygen transport from the lung to the various peripheral tissues. This Anser indicus (Bar-headed goose) protein is Hemoglobin subunit beta (HBB).